The chain runs to 205 residues: Recombination protein RecR (205 aa).

Residues 59-74 (CSVCFHLSAEPVCEVC) form a C4-type zinc finger. In terms of domain architecture, Toprim spans 82–181 (GTLCVVADSR…KVTRIAFGLP (100 aa)).

The protein belongs to the RecR family.

In terms of biological role, may play a role in DNA repair. It seems to be involved in an RecBC-independent recombinational process of DNA repair. It may act with RecF and RecO. The polypeptide is Recombination protein RecR (Cyanothece sp. (strain PCC 7425 / ATCC 29141)).